Reading from the N-terminus, the 356-residue chain is Tyrosine recombinase XerS (356 aa).

The Core-binding (CB) domain occupies 16–121 (IMPWYVLDYY…ALSSLYKYLT (106 aa)). Residues 169-354 (AFLDYVDKEY…VNDEQKNALD (186 aa)) enclose the Tyr recombinase domain. Active-site residues include arginine 210, lysine 234, histidine 306, arginine 309, and histidine 332. Tyrosine 341 serves as the catalytic O-(3'-phospho-DNA)-tyrosine intermediate.

This sequence belongs to the 'phage' integrase family. XerS subfamily.

The protein localises to the cytoplasm. Its activity is regulated as follows. FtsK is required for recombination. Site-specific tyrosine recombinase, which acts by catalyzing the cutting and rejoining of the recombining DNA molecules. Essential to convert dimers of the bacterial chromosome into monomers to permit their segregation at cell division. In Streptococcus pyogenes serotype M2 (strain MGAS10270), this protein is Tyrosine recombinase XerS.